The primary structure comprises 428 residues: Proteinase-activated receptor 1 (428 aa).

Positions 1–21 (MGPQRLLLVAAGLSLCGPLLS) are cleaved as a signal peptide. Residues 22–41 (SRVPVRQPESEMTDATVNPR) constitute a propeptide, removed for receptor activation. The Extracellular segment spans residues 42-105 (SFFLRNPGEN…SGYLTSPWLR (64 aa)). Residues N65 and N78 are each glycosylated (N-linked (GlcNAc...) asparagine). The helical transmembrane segment at 106 to 131 (LFIPSVYTFVFVVSLPLNILAIAVFV) threads the bilayer. At 132–140 (LKMKVKKPA) the chain is on the cytoplasmic side. The chain crosses the membrane as a helical span at residues 141–160 (VVYMLHLAMADVLFVSVLPL). Topologically, residues 161 to 179 (KISYYFSGSDWQFGSGMCR) are extracellular. A disulfide bridge links C178 with C257. A helical transmembrane segment spans residues 180–201 (FATAAFYCNMYASIMLMTVISI). Residues 202 to 221 (DRFLAVVYPIQSLSWRTLGR) lie on the Cytoplasmic side of the membrane. Residues 222–242 (ANFTCLVIWVMAIMGVVPLLL) form a helical membrane-spanning segment. Topologically, residues 243–271 (KEQTTRVPGLNITTCHDVLNETLLQGFYS) are extracellular. N-linked (GlcNAc...) asparagine glycosylation is found at N253 and N262. Residues 272-291 (YYFSAFSAVFFLVPLIISTI) traverse the membrane as a helical segment. At 292-314 (CYMSIIRCLSSSSVANRSKKSRA) the chain is on the cytoplasmic side. The chain crosses the membrane as a helical span at residues 315–337 (LFLSAAVFCVFIVCFGPTNVLLI). Residues 338–352 (MHYLLLSDSPATEKA) are Extracellular-facing. The helical transmembrane segment at 353 to 377 (YFAYLLCVCVSSVSCCIDPLIYYYA) threads the bilayer. At 378–428 (SSECQRHLYGILCCKESSDPNSYNSTGQLMPSKMDTCSSHLNNSIYKKLLA) the chain is on the cytoplasmic side. A Phosphoserine modification is found at S421.

It belongs to the G-protein coupled receptor 1 family. Post-translationally, proteolytic cleavage by thrombin generates a new N-terminus that functions as a tethered ligand. Also proteolytically cleaved by cathepsin CTSG. In terms of processing, phosphorylated in the C-terminal tail; probably mediating desensitization prior to the uncoupling and internalization of the receptor.

The protein localises to the cell membrane. Its function is as follows. High affinity receptor that binds the activated thrombin, leading to calcium release from intracellular stores. The thrombin-activated receptor signaling pathway is mediated through PTX-insensitive G proteins, activation of phospholipase C resulting in the production of 1D-myo-inositol 1,4,5-trisphosphate (InsP3) which binds to InsP3 receptors causing calcium release from the stores. In astrocytes, the calcium released into the cytosol allows the Ca(2+)-dependent release of L-glutamate into the synaptic cleft through BEST1, that targets the neuronal postsynaptic GRIN2A/NMDAR receptor resulting in the synaptic plasticity regulation. May play a role in platelets activation and in vascular development. Mediates up-regulation of pro-inflammatory cytokines, such as MCP-1/CCL2 and IL6, triggered by coagulation factor Xa (F10) in cardiac fibroblasts and umbilical vein endothelial cells. This Cricetulus longicaudatus (Long-tailed dwarf hamster) protein is Proteinase-activated receptor 1.